An 838-amino-acid chain; its full sequence is MEQRASLDSEESESPPQENSCLDPPDRDPNCKPPPVKPHIFTTRSRTRLFGKGDSEEASPLDCPYEEGGLASCPIITVSSVLTIQRPGDGPASVRPSSQDSVSAGEKPPRLYDRRSIFDAVAQSNCQELESLLPFLQRSKKRLTDSEFKDPETGKTCLLKAMLNLHNGQNDTIALLLDVARKTDSLKQFVNASYTDSYYKGQTALHIAIERRNMTLVTLLVENGADVQAAANGDFFKKTKGRPGFYFGELPLSLAACTNQLAIVKFLLQNSWQPADISARDSVGNTVLHALVEVADNTVDNTKFVTSMYNEILILGAKLHPTLKLEEITNRKGLTPLALAASSGKIGVLAYILQREIHEPECRHLSRKFTEWAYGPVHSSLYDLSCIDTCEKNSVLEVIAYSSSETPNRHDMLLVEPLNRLLQDKWDRFVKRIFYFNFFVYCLYMIIFTAAAYYRPVEGLPPYKLKNTVGDYFRVTGEILSVSGGVYFFFRGIQYFLQRRPSLKSLFVDSYSEILFFVQSLFMLVSVVLYFSQRKEYVASMVFSLAMGWTNMLYYTRGFQQMGIYAVMIEKMILRDLCRFMFVYLVFLFGFSTAVVTLIEDGKNNSLPMESTPHKCRGSACKPGNSYNSLYSTCLELFKFTIGMGDLEFTENYDFKAVFIILLLAYVILTYILLLNMLIALMGETVNKIAQESKNIWKLQRAITILDTEKSFLKCMRKAFRSGKLLQVGFTPDGKDDYRWCFRVDEVNWTTWNTNVGIINEDPGNCEGVKRTLSFSLRSGRVSGRNWKNFALVPLLRDASTRDRHATQQEEVQLKHYTGSLKPEDAEVFKDSMVPGEK.

Disordered regions lie at residues 1–63 and 86–109; these read MEQR…PLDC and RPGD…EKPP. Residues 1-432 are Cytoplasmic-facing; sequence MEQRASLDSE…QDKWDRFVKR (432 aa). One copy of the ANK 1 repeat lies at 110–138; sequence RLYDRRSIFDAVAQSNCQELESLLPFLQR. Residue arginine 115 coordinates ATP. Position 116 is a phosphoserine; by PKA and PKD (serine 116). Phosphothreonine; by PKA; in vitro is present on threonine 144. Residues 153–185 form an ANK 2 repeat; that stretch reads TGKTCLLKAMLNLHNGQNDTIALLLDVARKTDS. ATP-binding positions include lysine 155, lysine 160, asparagine 164, 199-202, and 210-211; these read YKGQ and ER. 4 ANK repeats span residues 203 to 228, 249 to 276, 285 to 321, and 335 to 358; these read TALH…ADVQ, ELPL…QPAD, NTVL…KLHP, and TPLA…REIH. A Phosphothreonine; by PKA; in vitro modification is found at threonine 370. One copy of the ANK 7 repeat lies at 393 to 415; sequence NSVLEVIAYSSSETPNRHDMLLV. A helical transmembrane segment spans residues 433–453; that stretch reads IFYFNFFVYCLYMIIFTAAAY. Residues 454-471 lie on the Extracellular side of the membrane; sequence YRPVEGLPPYKLKNTVGD. The chain crosses the membrane as a helical span at residues 472 to 497; sequence YFRVTGEILSVSGGVYFFFRGIQYFL. Over 498–510 the chain is Cytoplasmic; that stretch reads QRRPSLKSLFVDS. Serine 502 is subject to Phosphoserine; by PKC/PRKCE. 511–512 is a binding site for resiniferatoxin; sequence YS. Residues 511-531 form a helical membrane-spanning segment; that stretch reads YSEILFFVQSLFMLVSVVLYF. Residues 532–535 lie on the Extracellular side of the membrane; that stretch reads SQRK. A helical membrane pass occupies residues 536–556; that stretch reads EYVASMVFSLAMGWTNMLYYT. Resiniferatoxin is bound by residues threonine 550 and arginine 557. Residues 557 to 571 are Cytoplasmic-facing; the sequence is RGFQQMGIYAVMIEK. The helical transmembrane segment at 572-599 threads the bilayer; sequence MILRDLCRFMFVYLVFLFGFSTAVVTLI. Topologically, residues 600-626 are extracellular; sequence EDGKNNSLPMESTPHKCRGSACKPGNS. The N-linked (GlcNAc...) asparagine glycan is linked to asparagine 604. An intramembrane region (pore-forming) is located at residues 627 to 649; it reads YNSLYSTCLELFKFTIGMGDLEF. Glycine 643 provides a ligand contact to Na(+). Residues 643–646 carry the Selectivity filter motif; sequence GMGD. Aspartate 646 serves as a coordination point for Ca(2+). At 650 to 657 the chain is on the extracellular side; sequence TENYDFKA. Residues 658–686 form a helical membrane-spanning segment; sequence VFIILLLAYVILTYILLLNMLIALMGETV. The tract at residues 684 to 712 is AD; that stretch reads ETVNKIAQESKNIWKLQRAITILDTEKSF. Residues 687 to 838 are Cytoplasmic-facing; sequence NKIAQESKNI…FKDSMVPGEK (152 aa). Threonine 704 carries the phosphothreonine modification. The interaction with calmodulin stretch occupies residues 767–801; it reads EGVKRTLSFSLRSGRVSGRNWKNFALVPLLRDAST. Serine 774 carries the post-translational modification Phosphoserine; by PKA; in vitro. The required for PIP2-mediated channel inhibition stretch occupies residues 777–792; it reads LRSGRVSGRNWKNFAL. A Phosphoserine; by PKC/PRKCE and PKC/PRKCZ modification is found at serine 800. A Phosphoserine; by PKA; in vitro modification is found at serine 820.

The protein belongs to the transient receptor (TC 1.A.4) family. TrpV subfamily. TRPV1 sub-subfamily. Homotetramer. Interacts with PIRT. May also form a heteromeric channel with TRPV3. Interacts with CALM, PRKCM and CSK. Interacts with PRKCG and NTRK1, probably by forming a trimeric complex. Interacts with the Scolopendra mutilans RhTx toxin. Interacts with the spider Tau-theraphotoxin-Hs1a. Interacts with TMEM100. Interacts with PACS2. In terms of processing, phosphorylation by PKA reverses capsaicin-induced dephosphorylation at multiple sites, probably including Ser-116 as a major phosphorylation site. Phosphorylation by CAMKII seems to regulate binding to vanilloids. Phosphorylated and modulated by PRKCE, PRKCM and probably PRKCZ. Dephosphorylation by calcineurin seems to lead to receptor desensitization and phosphorylation by CAMKII recovers activity. Predominantly expressed in trigeminal and dorsal root sensory ganglia. Expressed also in hippocampus, cortex, cerebellum, olfactory bulb, mesencephalon and hindbrain. High expression in the cell bodies and dendrites of neurons in the hippocampus and in the cortex. In the brain detected also in astrocytes and pericytes (at protein level). Isoform 1 and isoform 3 are expressed in brain and peripheral blood mononuclear cells.

The protein resides in the postsynaptic cell membrane. It localises to the cell projection. It is found in the dendritic spine membrane. Its subcellular location is the cell membrane. The catalysed reaction is Ca(2+)(in) = Ca(2+)(out). It carries out the reaction Mg(2+)(in) = Mg(2+)(out). It catalyses the reaction Na(+)(in) = Na(+)(out). The enzyme catalyses K(+)(in) = K(+)(out). With respect to regulation, channel activity is activated via the interaction with PIRT and phosphatidylinositol 4,5-bisphosphate (PIP2). Both PIRT and PIP2 are required to activate channel activity. The channel is sensitized by ATP binding. Repeated stimulation with capsaicin gives rise to progressively smaller responses, due to desensitization. This desensitization is triggered by the influx of calcium ions and is inhibited by elevated ATP levels. Ca(2+) and CALM displace ATP from its binding site and trigger a conformation change that leads to a closed, desensitized channel. Intracellular PIP2 inhibits desensitization. The double-knot toxin (DkTx) from the Chinese earth tiger tarantula activates the channel and traps it in an open conformation. The Scolopendra mutilans RhTx toxin potentiates the heat activation pathway mediated by this channel by binding to the charge-rich outer pore region (in an activated state). Non-selective calcium permeant cation channel involved in detection of noxious chemical and thermal stimuli. Seems to mediate proton influx and may be involved in intracellular acidosis in nociceptive neurons. Involved in mediation of inflammatory pain and hyperalgesia. Sensitized by a phosphatidylinositol second messenger system activated by receptor tyrosine kinases, which involves PKC isozymes and PCL. Activation by vanilloids, like capsaicin, and temperatures higher than 42 degrees Celsius. Upon activation, exhibits a time- and Ca(2+)-dependent outward rectification, followed by a long-lasting refractory state. Mild extracellular acidic pH (6.5) potentiates channel activation by noxious heat and vanilloids, whereas acidic conditions (pH &lt;6) directly activate the channel. Can be activated by endogenous compounds, including 12-hydroperoxytetraenoic acid and bradykinin. Acts as ionotropic endocannabinoid receptor with central neuromodulatory effects. Triggers a form of long-term depression (TRPV1-LTD) mediated by the endocannabinoid anandamine in the hippocampus and nucleus accumbens by affecting AMPA receptors endocytosis. In terms of biological role, does not display channel activity in response to noxious chemical compounds, such as capsaicin and the vanilloid resiniferatoxin. Channel activity is not elicited by mildly acidic extracellular pH, and only slight channel activity is observed in response to noxiuos heat stimuli. The protein is Transient receptor potential cation channel subfamily V member 1 (Trpv1) of Rattus norvegicus (Rat).